Consider the following 596-residue polypeptide: Fc receptor-like protein 5 (596 aa).

A signal peptide spans Met-1–Gly-26. Over Gln-27 to Ala-496 the chain is Extracellular. 5 Ig-like C2-type domains span residues Ser-34–Ser-115, Pro-106–Val-199, Pro-207–Ile-294, Pro-296–Ser-384, and Pro-398–Ser-483. Cystine bridges form between Cys-55-Cys-99, Cys-137-Cys-181, and Cys-228-Cys-277. N-linked (GlcNAc...) asparagine glycosylation is present at Asn-324. Intrachain disulfides connect Cys-325/Cys-373 and Cys-419/Cys-466. N-linked (GlcNAc...) asparagine glycosylation is present at Asn-436. The chain crosses the membrane as a helical span at residues Ala-497–Phe-517. Topologically, residues Ser-518–Lys-596 are cytoplasmic. Disordered stretches follow at residues Gly-522–Tyr-544 and Glu-561–Lys-596. Residues Lys-577 to Lys-596 show a composition bias toward basic and acidic residues.

Interacts with CR2. Interacts with CD19. Phosphorylated on cytoplasmic tyrosines; required for interaction with protein tyrosine phosphatases and protein tyrosine kinases. As to expression, preferentially expressed in marginal zone B cells.

The protein resides in the cell membrane. Plays an important role in B-cell response to antigen that acts both as a negative or positive coreceptor. Inhibits B-cell receptor (BCR) signaling in the absence of CR2 stimulation but engagement with CR2 and the BCR lead to a superior calcium response compared to CR2 and BCR costimulation. May be involved in B-cell development and differentiation in peripheral lymphoid organs and may be useful markers of B-cell stages. May have an immunoregulatory role in marginal zone B-cells. May play a role in fertilization. This Mus musculus (Mouse) protein is Fc receptor-like protein 5 (Fcrl5).